Reading from the N-terminus, the 519-residue chain is 3-octaprenyl-4-hydroxybenzoate carboxy-lyase (519 aa).

Asn-177 lines the Mn(2+) pocket. Prenylated FMN contacts are provided by residues 180–182 (IYR), 194–196 (RWL), and 199–200 (RG). Glu-243 contacts Mn(2+). Asp-318 acts as the Proton donor in catalysis.

This sequence belongs to the UbiD family. Homohexamer. It depends on prenylated FMN as a cofactor. Requires Mn(2+) as cofactor.

It is found in the cell membrane. The catalysed reaction is a 4-hydroxy-3-(all-trans-polyprenyl)benzoate + H(+) = a 2-(all-trans-polyprenyl)phenol + CO2. Its pathway is cofactor biosynthesis; ubiquinone biosynthesis. Catalyzes the decarboxylation of 3-octaprenyl-4-hydroxy benzoate to 2-octaprenylphenol, an intermediate step in ubiquinone biosynthesis. This chain is 3-octaprenyl-4-hydroxybenzoate carboxy-lyase, found in Burkholderia mallei (strain ATCC 23344).